Consider the following 462-residue polypeptide: Tissue alpha-L-fucosidase (462 aa).

A signal peptide spans 1–28 (MWDLKSEWWAVGFGLLLLLAASAQAGGL). N-linked (GlcNAc...) asparagine glycosylation is found at N237, N264, and N378.

Belongs to the glycosyl hydrolase 29 family. As to quaternary structure, homotetramer.

It is found in the lysosome. It catalyses the reaction an alpha-L-fucoside + H2O = L-fucose + an alcohol. It carries out the reaction a neolactoside IV(2)-alpha-Fuc-nLc4Cer(d18:1(4E)) + H2O = a neolactoside nLc4Cer(d18:1(4E)) + L-fucose. The enzyme catalyses a neolactoside IV(2)-alpha-Fuc-nLc4Cer(d18:0) + H2O = a neolactoside nLc4Cer(d18:0) + L-fucose. In terms of biological role, alpha-L-fucosidase is responsible for hydrolyzing the alpha-1,6-linked fucose joined to the reducing-end N-acetylglucosamine of the carbohydrate moieties of glycoproteins. The polypeptide is Tissue alpha-L-fucosidase (Fuca1) (Rattus norvegicus (Rat)).